We begin with the raw amino-acid sequence, 1152 residues long: Syntaxin-binding protein 5 (1152 aa).

Residues 14-35 are disordered; the sequence is TAGSSSASQQQQQQQHPPGNRE. Over residues 17 to 28 the composition is skewed to low complexity; the sequence is SSSASQQQQQQQ. WD repeat units lie at residues 62 to 95, 102 to 141, 146 to 182, 201 to 235, 241 to 273, 295 to 337, 345 to 379, 401 to 478, 506 to 620, and 634 to 696; these read SALA…CYCQ, VIQL…SLKF, VTFC…GYVI, HISD…DYRY, IHSV…PAKP, PILK…KSTA, IVDF…LIDL, TCCE…YKLK, QIIS…ELVI, and TSLA…SGAG. 2 disordered regions span residues 555–596 and 675–731; these read VDTP…GLRD and SNDP…QKVN. Ser-693 carries the phosphoserine modification. A compositionally biased stretch (low complexity) spans 713–722; that stretch reads SPTSGSSSPH. Ser-724 and Ser-760 each carry phosphoserine. Phosphothreonine is present on Thr-763. At Ser-783 the chain carries Phosphoserine. Thr-785 carries the phosphothreonine modification. Ser-786 is modified (phosphoserine). WD repeat units follow at residues 795 to 852, 861 to 935, 940 to 984, and 998 to 1021; these read ISAL…SGTI, RMAF…QSCA, ITET…LDVY, and CFAN…TYSQ. The span at 883–893 shows a compositional bias: basic and acidic residues; it reads NVAEEKDEKEK. The segment at 883 to 907 is disordered; sequence NVAEEKDEKEKLKKRRPVSVSPSSS. Phosphoserine occurs at positions 901 and 903. Thr-1040 is subject to Phosphothreonine. Ser-1059 and Ser-1132 each carry phosphoserine. The v-SNARE coiled-coil homology domain occupies 1087–1147; it reads GIEGVKGAAS…HEMMLKYKDK (61 aa).

This sequence belongs to the WD repeat L(2)GL family. In terms of assembly, part of a complex that contains STX1, STXBP5, SNAP25 and SYT1. Interacts with STX1A and STX4A via its v-SNARE homology domain. Part of a complex that contains STXBP5, STX4A and SNAP23. As to expression, detected in heart, spleen, lung, skeletal muscle, liver and kidney (at protein level). Detected in brain, particularly in the olfactory bulb and in hippocampus. Detected in the tenia tecta and in the piriform layer of the brain cortex.

It is found in the cytoplasm. The protein resides in the cell membrane. Its subcellular location is the membrane. Functionally, plays a regulatory role in calcium-dependent exocytosis and neurotransmitter release. Inhibits membrane fusion between transport vesicles and the plasma membrane. May modulate the assembly of trans-SNARE complexes between transport vesicles and the plasma membrane. Competes with STXBP1 for STX1 binding. Inhibits translocation of GLUT4 from intracellular vesicles to the plasma membrane. In Mus musculus (Mouse), this protein is Syntaxin-binding protein 5 (Stxbp5).